The following is an 80-amino-acid chain: MANYITIAIIVGIVCGQALSVEDVDRNLLELNLPYGRGLDSELQLARLMLAAPRFCHPKRNSELINSLLGLPKNMHNAGK.

The N-terminal stretch at 1–20 is a signal peptide; it reads MANYITIAIIVGIVCGQALS. Residues 21–58 constitute a propeptide that is removed on maturation; it reads VEDVDRNLLELNLPYGRGLDSELQLARLMLAAPRFCHP. Alanine 78 bears the Alanine amide mark.

This sequence belongs to the arthropod PDH family. In terms of tissue distribution, expressed in the brain (at protein level).

It localises to the secreted. Its function is as follows. Neuropeptide PDF is the main transmitter regulating circadian locomotor rhythms. The polypeptide is Pigment-dispersing hormone peptides (Camponotus floridanus (Florida carpenter ant)).